The primary structure comprises 350 residues: Small ribosomal subunit biogenesis GTPase RsgA (350 aa).

Residues 1–17 (MSKNKLSKGQQRRVNAN) are compositionally biased toward polar residues. Residues 1 to 33 (MSKNKLSKGQQRRVNANHQRRLKTSKEKPDYDD) are disordered. In terms of domain architecture, CP-type G spans 104–273 (TSVLTRPDFY…VIDSPGVREF (170 aa)). GTP contacts are provided by residues 160–163 (NKID) and 214–222 (GQSGVGKSS). The Zn(2+) site is built by Cys-297, Cys-302, His-304, and Cys-310.

This sequence belongs to the TRAFAC class YlqF/YawG GTPase family. RsgA subfamily. In terms of assembly, monomer. Associates with 30S ribosomal subunit, binds 16S rRNA. The cofactor is Zn(2+).

The protein localises to the cytoplasm. One of several proteins that assist in the late maturation steps of the functional core of the 30S ribosomal subunit. Helps release RbfA from mature subunits. May play a role in the assembly of ribosomal proteins into the subunit. Circularly permuted GTPase that catalyzes slow GTP hydrolysis, GTPase activity is stimulated by the 30S ribosomal subunit. This Shigella flexneri protein is Small ribosomal subunit biogenesis GTPase RsgA.